We begin with the raw amino-acid sequence, 627 residues long: Altered inheritance of mitochondria protein 9, mitochondrial (627 aa).

A mitochondrion-targeting transit peptide spans 1–43 (MIRYTVAGHSRRCVVGASKRVGAIKCITVAATKRFISNKPNEV).

The protein belongs to the AIM9 family.

It localises to the mitochondrion. In Saccharomyces cerevisiae (strain YJM789) (Baker's yeast), this protein is Altered inheritance of mitochondria protein 9, mitochondrial (AIM9).